The chain runs to 456 residues: TGACG-sequence-specific DNA-binding protein TGA-2.1 (456 aa).

2 disordered regions span residues M1–R41 and S115–L170. Composition is skewed to polar residues over residues G9–R41 and G125–D141. Basic and acidic residues predominate over residues D158–T169. In terms of domain architecture, bZIP spans D166 to G229. Residues Q167–N220 are a coiled coil. Positions K168 to K188 are basic motif. The tract at residues L194–L208 is leucine-zipper. Residues P233–R450 enclose the DOG1 domain.

The protein belongs to the bZIP family. As to quaternary structure, can form heterodimer with TGA2.2.

The protein resides in the nucleus. Transcriptional activator that binds specifically to the DNA sequence 5'-TGACG-3'. Recognizes ocs elements like the as-1 motif of the cauliflower mosaic virus 35S promoter. Binding to the as-1-like cis elements mediate auxin- and salicylic acid-inducible transcription. The polypeptide is TGACG-sequence-specific DNA-binding protein TGA-2.1 (TGA21) (Nicotiana tabacum (Common tobacco)).